A 329-amino-acid polypeptide reads, in one-letter code: DNA-directed RNA polymerase subunit alpha (329 aa).

The tract at residues 1-235 (MQGSVTEFLK…EQLEAFVDLR (235 aa)) is alpha N-terminal domain (alpha-NTD). The segment at 249 to 329 (FDPILLRPVD…NWPPASIADE (81 aa)) is alpha C-terminal domain (alpha-CTD).

The protein belongs to the RNA polymerase alpha chain family. In terms of assembly, homodimer. The RNAP catalytic core consists of 2 alpha, 1 beta, 1 beta' and 1 omega subunit. When a sigma factor is associated with the core the holoenzyme is formed, which can initiate transcription.

It carries out the reaction RNA(n) + a ribonucleoside 5'-triphosphate = RNA(n+1) + diphosphate. Functionally, DNA-dependent RNA polymerase catalyzes the transcription of DNA into RNA using the four ribonucleoside triphosphates as substrates. This is DNA-directed RNA polymerase subunit alpha from Cronobacter sakazakii (strain ATCC BAA-894) (Enterobacter sakazakii).